A 434-amino-acid chain; its full sequence is ATP-sensitive inward rectifier potassium channel 14 (434 aa).

Over 1–81 the chain is Cytoplasmic; that stretch reads MGLARALRRL…LSDLFTTCVD (81 aa). The residue at position 79 (C79) is an S-nitrosocysteine. The chain crosses the membrane as a helical span at residues 82-108; it reads VRWRWMCLLFSCSFLASWLLFGLTFWL. Residues 109 to 131 lie on the Extracellular side of the membrane; sequence IASLHGDLAAPPPPAPCFSQVAS. The segment at residues 132 to 148 is an intramembrane region (helical; Pore-forming); sequence FLAAFLFALETQTSIGY. Residues 145–150 carry the Selectivity filter motif; that stretch reads SIGYGV. Topologically, residues 149–157 are extracellular; the sequence is GVRSVTEEC. The chain crosses the membrane as a helical span at residues 158-185; that stretch reads PAAVAAVVLQCIAGCVLDAFVVGAVMAK. Residues 186–434 lie on the Cytoplasmic side of the membrane; the sequence is MAKPKKRNET…TPTLALTLPP (249 aa). The interval 398–434 is disordered; it reads QEEDEEEDTKEGTSAETPERAASPQALTPTLALTLPP. Residues 407-416 show a composition bias toward basic and acidic residues; that stretch reads KEGTSAETPE. Residues 418-434 are compositionally biased toward low complexity; that stretch reads AASPQALTPTLALTLPP.

Belongs to the inward rectifier-type potassium channel (TC 1.A.2.1) family. KCNJ14 subfamily.

Its subcellular location is the membrane. The catalysed reaction is K(+)(in) = K(+)(out). Channel activity is regulated by variations of cytosolic pH; channels are activated by alkaline and inhibited by acidic pH values. Inhibited by Ba(2+) and Cs(+) in a voltage-dependent manner; sensitivity to those inhibitors is lower than in other Kir channels. In terms of biological role, inward rectifier potassium channels are characterized by a greater tendency to allow potassium to flow into the cell rather than out of it. Their voltage dependence is regulated by the concentration of extracellular potassium; as external potassium is raised, the voltage range of the channel opening shifts to more positive voltages. The polypeptide is ATP-sensitive inward rectifier potassium channel 14 (Kcnj14) (Mus musculus (Mouse)).